Consider the following 967-residue polypeptide: Phosphoenolpyruvate carboxylase 2 (967 aa).

A Phosphoserine modification is found at serine 13. Active-site residues include histidine 174 and lysine 602.

Belongs to the PEPCase type 1 family. In terms of assembly, homotetramer. Mg(2+) is required as a cofactor.

It localises to the cytoplasm. The enzyme catalyses oxaloacetate + phosphate = phosphoenolpyruvate + hydrogencarbonate. The protein operates within photosynthesis; C3 acid pathway. With respect to regulation, by light-reversible phosphorylation. Its function is as follows. Through the carboxylation of phosphoenolpyruvate (PEP) it forms oxaloacetate, a four-carbon dicarboxylic acid source for the tricarboxylic acid cycle. The polypeptide is Phosphoenolpyruvate carboxylase 2 (PEP4) (Zea mays (Maize)).